A 224-amino-acid polypeptide reads, in one-letter code: Deoxyribose-phosphate aldolase (224 aa).

The active-site Proton donor/acceptor is the Asp98. The active-site Schiff-base intermediate with acetaldehyde is the Lys159. The Proton donor/acceptor role is filled by Lys189.

It belongs to the DeoC/FbaB aldolase family. DeoC type 1 subfamily.

It is found in the cytoplasm. It carries out the reaction 2-deoxy-D-ribose 5-phosphate = D-glyceraldehyde 3-phosphate + acetaldehyde. Its pathway is carbohydrate degradation; 2-deoxy-D-ribose 1-phosphate degradation; D-glyceraldehyde 3-phosphate and acetaldehyde from 2-deoxy-alpha-D-ribose 1-phosphate: step 2/2. Catalyzes a reversible aldol reaction between acetaldehyde and D-glyceraldehyde 3-phosphate to generate 2-deoxy-D-ribose 5-phosphate. This is Deoxyribose-phosphate aldolase from Methanothermobacter thermautotrophicus (strain ATCC 29096 / DSM 1053 / JCM 10044 / NBRC 100330 / Delta H) (Methanobacterium thermoautotrophicum).